A 214-amino-acid chain; its full sequence is ATP phosphoribosyltransferase (214 aa).

This sequence belongs to the ATP phosphoribosyltransferase family. Short subfamily. Heteromultimer composed of HisG and HisZ subunits.

The protein localises to the cytoplasm. It carries out the reaction 1-(5-phospho-beta-D-ribosyl)-ATP + diphosphate = 5-phospho-alpha-D-ribose 1-diphosphate + ATP. It functions in the pathway amino-acid biosynthesis; L-histidine biosynthesis; L-histidine from 5-phospho-alpha-D-ribose 1-diphosphate: step 1/9. Catalyzes the condensation of ATP and 5-phosphoribose 1-diphosphate to form N'-(5'-phosphoribosyl)-ATP (PR-ATP). Has a crucial role in the pathway because the rate of histidine biosynthesis seems to be controlled primarily by regulation of HisG enzymatic activity. The chain is ATP phosphoribosyltransferase from Nostoc punctiforme (strain ATCC 29133 / PCC 73102).